The sequence spans 265 residues: Mlc titration factor A (265 aa).

Zn(2+)-binding residues include H111, H148, H152, and E211.

The protein belongs to the MtfA family. In terms of assembly, interacts with Mlc. The cofactor is Zn(2+).

The protein localises to the cytoplasm. Functionally, involved in the modulation of the activity of the glucose-phosphotransferase system (glucose-PTS). Interacts with the transcriptional repressor Mlc, preventing its interaction with DNA and leading to the modulation of expression of genes regulated by Mlc, including ptsG, which encodes the PTS system glucose-specific EIICB component. Its function is as follows. Shows zinc-dependent metallopeptidase activity. The sequence is that of Mlc titration factor A from Klebsiella pneumoniae (strain 342).